The sequence spans 850 residues: Protein STB2 (850 aa).

Residues serine 594 and serine 625 each carry the phosphoserine modification.

It to yeast STB6. In terms of assembly, interacts with SIN3.

This chain is Protein STB2 (STB2), found in Saccharomyces cerevisiae (strain ATCC 204508 / S288c) (Baker's yeast).